Here is a 461-residue protein sequence, read N- to C-terminus: A-type ATP synthase subunit B (461 aa).

It belongs to the ATPase alpha/beta chains family. As to quaternary structure, has multiple subunits with at least A(3), B(3), C, D, E, F, H, I and proteolipid K(x).

The protein localises to the cell membrane. Functionally, component of the A-type ATP synthase that produces ATP from ADP in the presence of a proton gradient across the membrane. The B chain is a regulatory subunit. The chain is A-type ATP synthase subunit B from Methanoculleus marisnigri (strain ATCC 35101 / DSM 1498 / JR1).